Consider the following 253-residue polypeptide: Isoprenyl transferase (253 aa).

The active site involves aspartate 32. Position 32 (aspartate 32) interacts with Mg(2+). Residues 33–36, tryptophan 37, arginine 45, histidine 49, and 77–79 each bind substrate; these read GNGR and STE. Catalysis depends on asparagine 80, which acts as the Proton acceptor. Substrate-binding positions include tryptophan 81, arginine 83, arginine 200, and 206–208; that span reads RLS. Glutamate 219 contributes to the Mg(2+) binding site.

Belongs to the UPP synthase family. In terms of assembly, homodimer. Mg(2+) is required as a cofactor.

Functionally, catalyzes the condensation of isopentenyl diphosphate (IPP) with allylic pyrophosphates generating different type of terpenoids. This chain is Isoprenyl transferase, found in Clostridium perfringens (strain 13 / Type A).